Here is a 374-residue protein sequence, read N- to C-terminus: MTSPALKDPAKTRVIVGMSGGVDSSVSALLLMEQGYQVEGLFMKNWEEDDGTEYCTAREDLADAQAVCDRIGIKLHTANFAAEYWDNVFEHFLEEYKAGRTPNPDILCNREIKFKAFLDYALSLGADLIATGHYVRRRDTGELTELLKGLDPNKDQSYFLHAVGGKEIARTLFPVGELEKPEVRAIAEKHGLATAKKKDSTGICFIGERRFSDFLKQYLPAQPGEIQTTEGEVIGRHHGLMYHTIGQRQGLGIGGLKDAGDEPWYVLHKDLARNVLVVGQGNEHPWLFSRALLASEIFWVNPIDLSSPRRLTAKVRYRQGDQQCTLERTENGYRAMFDEPQRAVTPGQSVVFYDGEVCLGGGVIETAEPWSPRQ.

ATP-binding positions include 17-24 (GMSGGVDS) and Met43. The interval 103–105 (NPD) is interaction with target base in tRNA. Cys108 functions as the Nucleophile in the catalytic mechanism. Cys108 and Cys204 are joined by a disulfide. Gly132 is an ATP binding site. The tract at residues 154 to 156 (KDQ) is interaction with tRNA. The Cysteine persulfide intermediate role is filled by Cys204. The tract at residues 316-317 (RY) is interaction with tRNA.

This sequence belongs to the MnmA/TRMU family.

It localises to the cytoplasm. The catalysed reaction is S-sulfanyl-L-cysteinyl-[protein] + uridine(34) in tRNA + AH2 + ATP = 2-thiouridine(34) in tRNA + L-cysteinyl-[protein] + A + AMP + diphosphate + H(+). In terms of biological role, catalyzes the 2-thiolation of uridine at the wobble position (U34) of tRNA, leading to the formation of s(2)U34. The sequence is that of tRNA-specific 2-thiouridylase MnmA from Pseudomonas entomophila (strain L48).